A 1281-amino-acid chain; its full sequence is Zinc finger transcription factor Trps1 (1281 aa).

The tract at residues 1 to 198 (MVRKKNPPLR…VPSDGGVRLN (198 aa)) is disordered. K29 is covalently cross-linked (Glycyl lysine isopeptide (Lys-Gly) (interchain with G-Cter in SUMO2)). Over residues 40-49 (DQMSENTDQS) the composition is skewed to polar residues. Residues 53-63 (ELNHKEEHSLH) are compositionally biased toward basic and acidic residues. K76 is covalently cross-linked (Glycyl lysine isopeptide (Lys-Gly) (interchain with G-Cter in SUMO2)). 2 positions are modified to phosphoserine: S90 and S127. A compositionally biased stretch (basic and acidic residues) spans 148–162 (LETKEDQKMSPKATE). Residues 163–189 (ETGQAQSGQANCQGLSPVSVASKNPQV) show a composition bias toward polar residues. A phosphoserine mark is found at S178 and S216. Residues 222-247 (FKCNICGYGYYGNDPTDLIKHFRKYH) form a C2H2-type 1; atypical zinc finger. K263 participates in a covalent cross-link: Glycyl lysine isopeptide (Lys-Gly) (interchain with G-Cter in SUMO2). The C2H2-type 2; atypical zinc-finger motif lies at 333–358 (FRCKFCNFTYMGNSSTELEQHFLQTH). The disordered stretch occupies residues 365 to 394 (SLPSSEVAKPSEKNSNKSIPALQSSDSGDL). A compositionally biased stretch (polar residues) spans 380-391 (NKSIPALQSSDS). Residues K418, K457, K474, and K488 each participate in a glycyl lysine isopeptide (Lys-Gly) (interchain with G-Cter in SUMO2) cross-link. Residues 483 to 512 (QNDLAKSSEGETMTKTDKSSSGAKKKDFSS) are disordered. A compositionally biased stretch (basic and acidic residues) spans 488–512 (KSSEGETMTKTDKSSSGAKKKDFSS). Residues 614 to 637 (HQCHQCSFTTPDVDVLLFHYESVH) form a C2H2-type 3; atypical zinc finger. Residues 635 to 819 (SVHESQASDV…SLGLLTPVSG (185 aa)) are mediates interaction with GLI3. Residue K645 forms a Glycyl lysine isopeptide (Lys-Gly) (interchain with G-Cter in SUMO2) linkage. 2 C2H2-type zinc fingers span residues 666-689 (HSCTKCDFITQVEEEISRHYRRAH) and 692-715 (YKCRQCSFTAADTQSLLEHFNTVH). K737 participates in a covalent cross-link: Glycyl lysine isopeptide (Lys-Gly) (interchain with G-Cter in SUMO2). The residue at position 751 (T751) is a Phosphothreonine. A Glycyl lysine isopeptide (Lys-Gly) (interchain with G-Cter in SUMO2) cross-link involves residue K755. K766 is covalently cross-linked (Glycyl lysine isopeptide (Lys-Gly) (interchain with G-Cter in SUMO1); alternate). Residue K766 forms a Glycyl lysine isopeptide (Lys-Gly) (interchain with G-Cter in SUMO2); alternate linkage. Glycyl lysine isopeptide (Lys-Gly) (interchain with G-Cter in SUMO2) cross-links involve residues K825, K850, K877, and K879. Residues 856–887 (APAGGEKSGALPQQYPASGENKSKDESQSLLR) are disordered. The GATA-type zinc-finger motif lies at 896–920 (CANCLTTKTSLWRKNANGGYVCNAC). Glycyl lysine isopeptide (Lys-Gly) (interchain with G-Cter in SUMO2) cross-links involve residues K925, K937, and K965. Residues 961-977 (EQLNKQQRGSNEEQVNG) are compositionally biased toward polar residues. A disordered region spans residues 961–1000 (EQLNKQQRGSNEEQVNGSPLERRSEDHLTESHQREIPLPS). S978 carries the phosphoserine modification. The segment covering 980 to 995 (LERRSEDHLTESHQRE) has biased composition (basic and acidic residues). Positions 985-1184 (EDHLTESHQR…PTANGASKEK (200 aa)) are mediates interaction with RNF4. Glycyl lysine isopeptide (Lys-Gly) (interchain with G-Cter in SUMO2) cross-links involve residues K1003, K1012, K1030, and K1040. The tract at residues 1039-1080 (IKSPQESTGDPGNSSSVSEGKGSSERGSPIEKYMRPAKHPNY) is disordered. The segment covering 1040–1049 (KSPQESTGDP) has biased composition (polar residues). Position 1041 is a phosphoserine (S1041). Positions 1050 to 1059 (GNSSSVSEGK) are enriched in low complexity. Over residues 1060 to 1072 (GSSERGSPIEKYM) the composition is skewed to basic and acidic residues. The residue at position 1066 (S1066) is a Phosphoserine. K1070 participates in a covalent cross-link: Glycyl lysine isopeptide (Lys-Gly) (interchain with G-Cter in SUMO2). A Phosphoserine modification is found at S1085. Residues 1163–1281 (PLDLAIKHSR…QVEKNGKPKE (119 aa)) form a transcriptional repressor domain region. Residues 1168–1196 (IKHSRPGPTANGASKEKTKAPPNVKNEGP) are disordered. Residues K1192 and K1201 each participate in a glycyl lysine isopeptide (Lys-Gly) (interchain with G-Cter in SUMO2); alternate cross-link. Glycyl lysine isopeptide (Lys-Gly) (interchain with G-Cter in SUMO); alternate cross-links involve residues K1192 and K1201. A Glycyl lysine isopeptide (Lys-Gly) (interchain with G-Cter in SUMO1); alternate cross-link involves residue K1201. C2H2-type zinc fingers lie at residues 1215–1237 (TKCVHCGIVFLDEVMYALHMSCH) and 1243–1267 (FQCSICQHLCTDKYDFTTHIQRGLH).

As to quaternary structure, interacts with RNF4; regulates TRPS1 repressor activity. Interacts specifically with the activator form of GLI3 (GLI3A) but not with the repressor form (GLI3R). Post-translationally, sumoylated. Sumoylation in the repressor domain inhibits the transcription repression activity. Sumoylation on Lys-1201 is the major site. Appears to be sumoylated on multiple sites. In terms of tissue distribution, ubiquitously expressed in the adult. Found in fetal brain, lung, kidney, liver, spleen and thymus. More highly expressed in androgen-dependent than in androgen-independent prostate cancer cells.

The protein localises to the nucleus. Functionally, transcriptional repressor. Binds specifically to GATA sequences and represses expression of GATA-regulated genes at selected sites and stages in vertebrate development. Regulates chondrocyte proliferation and differentiation. Executes multiple functions in proliferating chondrocytes, expanding the region of distal chondrocytes, activating proliferation in columnar cells and supporting the differentiation of columnar into hypertrophic chondrocytes. This is Zinc finger transcription factor Trps1 (TRPS1) from Homo sapiens (Human).